Reading from the N-terminus, the 514-residue chain is Maltose/maltodextrin transport system permease protein MalF (514 aa).

Over 1–16 (MDVIKKKHWWQSDQLK) the chain is Cytoplasmic. A helical transmembrane segment spans residues 17-36 (WSVIGLLGLLVGYLVVLMYV). Over 37-39 (QGE) the chain is Periplasmic. Residues 40 to 57 (YLFAIMTLILSSAGLYIF) form a helical membrane-spanning segment. The Cytoplasmic segment spans residues 58–69 (ANRKTYAWRYVY). The chain crosses the membrane as a helical span at residues 70-92 (PGLAGMGLFVLFPLVCTIAIAFT). Residues 93–283 (NYSSTNQLTF…QKPFFAIFVW (191 aa)) lie on the Periplasmic side of the membrane. The ABC transmembrane type-1 domain occupies 281–505 (FVWTVVFSVL…LLVGALAIVN (225 aa)). Residues 284 to 306 (TVVFSVLTVVLTVAVGMVLACLV) traverse the membrane as a helical segment. At 307–318 (QWEALKGKAIYR) the chain is on the cytoplasmic side. Residues 319-341 (VLLILPYAVPSFISILIFKGLFN) traverse the membrane as a helical segment. The Periplasmic segment spans residues 342–369 (QSFGEINMMLSALFGIKPAWFSDPNTAR). The helical transmembrane segment at 370–392 (AMVIIVNTWLGYPYMMILCMGLL) threads the bilayer. Topologically, residues 393 to 412 (KAIPDDLYEASAMDGAGPFQ) are cytoplasmic. Residues 413 to 435 (NFFKITLPLLIKPLTPLMIASFA) form a helical membrane-spanning segment. Topologically, residues 436–483 (FNFNNFVLIQLLTNGGPDRLGTTTPAGYTDLLVSYTYRIAFEGGGGQD) are periplasmic. The chain crosses the membrane as a helical span at residues 484–506 (FGLAAAIATLIFLLVGALAIVNL). At 507-514 (KATRMKFD) the chain is on the cytoplasmic side.

It belongs to the binding-protein-dependent transport system permease family. MalFG subfamily. In terms of assembly, the complex is composed of two ATP-binding proteins (MalK), two transmembrane proteins (MalG and MalF) and a solute-binding protein (MalE).

The protein resides in the cell inner membrane. Functionally, part of the ABC transporter complex MalEFGK involved in maltose/maltodextrin import. Probably responsible for the translocation of the substrate across the membrane. The chain is Maltose/maltodextrin transport system permease protein MalF (malF) from Salmonella typhi.